The following is a 249-amino-acid chain: Probable septum site-determining protein MinC (249 aa).

The interval 117-138 (AVRPPQPPPPPHARAEPAAPVA) is disordered.

The protein belongs to the MinC family. As to quaternary structure, interacts with MinD and FtsZ.

Functionally, cell division inhibitor that blocks the formation of polar Z ring septums. Rapidly oscillates between the poles of the cell to destabilize FtsZ filaments that have formed before they mature into polar Z rings. Prevents FtsZ polymerization. The sequence is that of Probable septum site-determining protein MinC from Xanthomonas campestris pv. campestris (strain 8004).